A 569-amino-acid polypeptide reads, in one-letter code: Adenine deaminase 1 (569 aa).

The protein belongs to the metallo-dependent hydrolases superfamily. Adenine deaminase family. The cofactor is Mn(2+).

It catalyses the reaction adenine + H2O + H(+) = hypoxanthine + NH4(+). The sequence is that of Adenine deaminase 1 from Rhizobium johnstonii (strain DSM 114642 / LMG 32736 / 3841) (Rhizobium leguminosarum bv. viciae).